A 166-amino-acid chain; its full sequence is Peptidoglycan-associated lipoprotein (166 aa).

The N-terminal stretch at 1–21 is a signal peptide; sequence MEMLKFGKFAALALAMAVAVG. The N-palmitoyl cysteine moiety is linked to residue Cys22. The S-diacylglycerol cysteine moiety is linked to residue Cys22. Positions 54–166 constitute an OmpA-like domain; that stretch reads SEEAALRAIT…AQNRRVELRK (113 aa). The interval 147–166 is disordered; sequence VATGNDEQSWAQNRRVELRK.

This sequence belongs to the Pal lipoprotein family. In terms of assembly, the Tol-Pal system is composed of five core proteins: the inner membrane proteins TolA, TolQ and TolR, the periplasmic protein TolB and the outer membrane protein Pal. They form a network linking the inner and outer membranes and the peptidoglycan layer.

The protein localises to the cell outer membrane. Its function is as follows. Part of the Tol-Pal system, which plays a role in outer membrane invagination during cell division and is important for maintaining outer membrane integrity. This is Peptidoglycan-associated lipoprotein from Pseudomonas putida (Arthrobacter siderocapsulatus).